The sequence spans 235 residues: MAQTLNRSLTDLGALLHLVDPTLPIGGFNHSNGLETFVQQRVVESKATLEEYVQTQLLQNWIYNDGAYLSLAFDAMNEGNFDRLCELDWQLSATKVARESREGSFKLGVRLLKIFIRYETHALLTAYQKAIAEKRVQGYFPIVFAMVAQAMGLTKADTLYAFYYNAAVGVITNGVKLIPLSQMDGQDILFDLRGSLVQAVELSFDPDEEWLGAATLANDIRAMQHEVLYTRLYMS.

This sequence belongs to the UreF family. In terms of assembly, ureD, UreF and UreG form a complex that acts as a GTP-hydrolysis-dependent molecular chaperone, activating the urease apoprotein by helping to assemble the nickel containing metallocenter of UreC. The UreE protein probably delivers the nickel.

It localises to the cytoplasm. Required for maturation of urease via the functional incorporation of the urease nickel metallocenter. This Haemophilus influenzae (strain PittGG) protein is Urease accessory protein UreF.